The sequence spans 1374 residues: DNA-directed RNA polymerase subunit beta (1374 aa).

It belongs to the RNA polymerase beta chain family. As to quaternary structure, the RNAP catalytic core consists of 2 alpha, 1 beta, 1 beta' and 1 omega subunit. When a sigma factor is associated with the core the holoenzyme is formed, which can initiate transcription.

It catalyses the reaction RNA(n) + a ribonucleoside 5'-triphosphate = RNA(n+1) + diphosphate. In terms of biological role, DNA-dependent RNA polymerase catalyzes the transcription of DNA into RNA using the four ribonucleoside triphosphates as substrates. The polypeptide is DNA-directed RNA polymerase subunit beta (Rickettsia prowazekii (strain Madrid E)).